A 337-amino-acid chain; its full sequence is Cytoskeleton protein RodZ (337 aa).

Over 1 to 111 (MNTEATHDQN…LGKRRKKRDG (111 aa)) the chain is Cytoplasmic. One can recognise an HTH cro/C1-type domain in the interval 19–71 (LRNAREQLGLSQQAVAERLCLKVSTVRDIEEDKAPADLASTFLRGYIRSYARL). The H-T-H motif DNA-binding region spans 30-49 (QQAVAERLCLKVSTVRDIEE). The helical; Signal-anchor for type II membrane protein transmembrane segment at 112–132 (WLMTFTWLVLFVVIGLSGAWW) threads the bilayer. Topologically, residues 133-337 (WQDHKAQQEE…TLNAEQSPAQ (205 aa)) are periplasmic. The span at 145-167 (TMADQSSAELSSNSEQGQSVPLN) shows a compositional bias: polar residues. Positions 145-236 (TMADQSSAEL…TAATTPDGAA (92 aa)) are disordered. Positions 168 to 207 (TSTTTDPATTSTPPASVDTTATNTQTPAVTAPAPAVDPQQ) are enriched in low complexity. Residues 208-218 (NAVVSPSQANV) show a composition bias toward polar residues. Residues 219–236 (DTAATPAPTAATTPDGAA) are compositionally biased toward low complexity.

This sequence belongs to the RodZ family.

The protein resides in the cell inner membrane. In terms of biological role, cytoskeletal protein that is involved in cell-shape control through regulation of the length of the long axis. This Escherichia coli O139:H28 (strain E24377A / ETEC) protein is Cytoskeleton protein RodZ.